The primary structure comprises 240 residues: NADH-quinone oxidoreductase subunit I 2 (240 aa).

4Fe-4S ferredoxin-type domains follow at residues 57 to 86 (TDLRTGEYKCTSCMQCAQACPVNVITIEWH) and 97 to 126 (DRFAIDMSRCMLCNFCVEACPFDSLVMGYD). [4Fe-4S] cluster-binding residues include Cys-66, Cys-69, Cys-72, Cys-76, Cys-106, Cys-109, Cys-112, and Cys-116. Residues 185 to 240 (IHGYLGRPPLPKGYEPELKPQFRKPAEEAAEAQQAEAAGQPAAEPGKTNGEEAGQP) are disordered. Positions 198–211 (YEPELKPQFRKPAE) are enriched in basic and acidic residues. Low complexity predominate over residues 215 to 230 (EAQQAEAAGQPAAEPG).

Belongs to the complex I 23 kDa subunit family. In terms of assembly, NDH-1 is composed of 14 different subunits. Subunits NuoA, H, J, K, L, M, N constitute the membrane sector of the complex. It depends on [4Fe-4S] cluster as a cofactor.

Its subcellular location is the cell membrane. It catalyses the reaction a quinone + NADH + 5 H(+)(in) = a quinol + NAD(+) + 4 H(+)(out). Its function is as follows. NDH-1 shuttles electrons from NADH, via FMN and iron-sulfur (Fe-S) centers, to quinones in the respiratory chain. The immediate electron acceptor for the enzyme in this species is believed to be ubiquinone. Couples the redox reaction to proton translocation (for every two electrons transferred, four hydrogen ions are translocated across the cytoplasmic membrane), and thus conserves the redox energy in a proton gradient. This Symbiobacterium thermophilum (strain DSM 24528 / JCM 14929 / IAM 14863 / T) protein is NADH-quinone oxidoreductase subunit I 2.